The following is a 372-amino-acid chain: Ciliary neurotrophic factor receptor subunit alpha (372 aa).

An N-terminal signal peptide occupies residues 1 to 22; it reads MAAPVPWACCAVLAAAAAVVYA. Residues 27–104 enclose the Ig-like C2-type domain; sequence PQEAPHVQYE…WHLRHQVLLH (78 aa). A disulfide bridge links C46 with C89. Residues N60, N70, N142, and N190 are each glycosylated (N-linked (GlcNAc...) asparagine). Fibronectin type-III domains lie at 108 to 205 and 206 to 306; these read PPRE…VKPD and PPEN…TEEP. The short motif at 290–294 is the WSXWS motif element; that stretch reads WSDWS. The disordered stretch occupies residues 301–340; sequence PWTEEPRHLTTEAQAAETTTSTTSSLAPPPTTKICDPGEL. A compositionally biased stretch (low complexity) spans 311-326; it reads TEAQAAETTTSTTSSL. The GPI-anchor amidated serine moiety is linked to residue S342. The propeptide at 343-372 is removed in mature form; the sequence is GGGPSAPFLVSVPITLALAAAAATASSLLI.

The protein belongs to the type I cytokine receptor family. Type 3 subfamily. As to quaternary structure, forms a heterotrimer with LIFR and IL6ST. Interacts with heterodimeric neurotropic cytokine composed of CLCF1/CLC and CRLF1/CLF-1. Either alone or in complex with the heterodimer CLCF1-CRLF1 interacts with SORL1; this interaction may promote internalization and lysosomal degradation. Component of a receptor complex composed of IL6ST/GP130, IL27RA/WSX1 and CNTFR which interacts with the neuroprotective peptide humanin. As to expression, nervous system and skeletal muscle.

The protein localises to the cell membrane. Binds to CNTF. The alpha subunit provides the receptor specificity. Receptor for heterodimeric neurotropic cytokine composed of CLCF1/CLC and CRLF1/CLF-1. Acts as a receptor for the neuroprotective peptide humanin as part of a complex with IL6ST/GP130 and IL27RA/WSX1. This is Ciliary neurotrophic factor receptor subunit alpha (CNTFR) from Homo sapiens (Human).